The chain runs to 278 residues: Tryptophan synthase alpha chain (278 aa).

Residues E50 and D61 each act as proton acceptor in the active site.

This sequence belongs to the TrpA family. In terms of assembly, tetramer of two alpha and two beta chains.

It carries out the reaction (1S,2R)-1-C-(indol-3-yl)glycerol 3-phosphate + L-serine = D-glyceraldehyde 3-phosphate + L-tryptophan + H2O. It participates in amino-acid biosynthesis; L-tryptophan biosynthesis; L-tryptophan from chorismate: step 5/5. In terms of biological role, the alpha subunit is responsible for the aldol cleavage of indoleglycerol phosphate to indole and glyceraldehyde 3-phosphate. The protein is Tryptophan synthase alpha chain of Rhodopseudomonas palustris (strain BisB5).